Reading from the N-terminus, the 427-residue chain is Glutamate-1-semialdehyde 2,1-aminomutase (427 aa).

Lysine 267 is subject to N6-(pyridoxal phosphate)lysine.

It belongs to the class-III pyridoxal-phosphate-dependent aminotransferase family. HemL subfamily. In terms of assembly, homodimer. Pyridoxal 5'-phosphate serves as cofactor.

It is found in the cytoplasm. It catalyses the reaction (S)-4-amino-5-oxopentanoate = 5-aminolevulinate. It participates in porphyrin-containing compound metabolism; protoporphyrin-IX biosynthesis; 5-aminolevulinate from L-glutamyl-tRNA(Glu): step 2/2. In Citrifermentans bemidjiense (strain ATCC BAA-1014 / DSM 16622 / JCM 12645 / Bem) (Geobacter bemidjiensis), this protein is Glutamate-1-semialdehyde 2,1-aminomutase.